Here is a 258-residue protein sequence, read N- to C-terminus: UPF0246 protein CGSHiEE_07045 (258 aa).

It belongs to the UPF0246 family.

The chain is UPF0246 protein CGSHiEE_07045 from Haemophilus influenzae (strain PittEE).